A 247-amino-acid polypeptide reads, in one-letter code: ATP synthase subunit a, chloroplastic (247 aa).

A run of 5 helical transmembrane segments spans residues 38-58 (QVLI…IIAV), 95-115 (VPFI…GALL), 134-154 (INTT…AGLT), 199-219 (LVVV…VMFL), and 220-240 (GLFT…AYIG).

It belongs to the ATPase A chain family. In terms of assembly, F-type ATPases have 2 components, CF(1) - the catalytic core - and CF(0) - the membrane proton channel. CF(1) has five subunits: alpha(3), beta(3), gamma(1), delta(1), epsilon(1). CF(0) has four main subunits: a, b, b' and c.

The protein resides in the plastid. It is found in the chloroplast thylakoid membrane. Functionally, key component of the proton channel; it plays a direct role in the translocation of protons across the membrane. This is ATP synthase subunit a, chloroplastic from Ranunculus macranthus (Large buttercup).